Reading from the N-terminus, the 156-residue chain is MVKGRSNKTLAENRKARHDYFVEEAYEAGIELVGTEVKSIREGKANLKDSYAEIRNGEVFLRNMHVSPYEQGNIFNKDPLRDRKLLLHKMQILKLTAYTTQQGYTLIPLSLYLKNGRVKVNLAVAKGKKNYDKRQDLIEKAAKRDIERELKDRSRY.

This sequence belongs to the SmpB family.

The protein resides in the cytoplasm. Required for rescue of stalled ribosomes mediated by trans-translation. Binds to transfer-messenger RNA (tmRNA), required for stable association of tmRNA with ribosomes. tmRNA and SmpB together mimic tRNA shape, replacing the anticodon stem-loop with SmpB. tmRNA is encoded by the ssrA gene; the 2 termini fold to resemble tRNA(Ala) and it encodes a 'tag peptide', a short internal open reading frame. During trans-translation Ala-aminoacylated tmRNA acts like a tRNA, entering the A-site of stalled ribosomes, displacing the stalled mRNA. The ribosome then switches to translate the ORF on the tmRNA; the nascent peptide is terminated with the 'tag peptide' encoded by the tmRNA and targeted for degradation. The ribosome is freed to recommence translation, which seems to be the essential function of trans-translation. The sequence is that of SsrA-binding protein from Clostridium tetani (strain Massachusetts / E88).